The following is a 213-amino-acid chain: 3-isopropylmalate dehydratase small subunit (213 aa).

Belongs to the LeuD family. LeuD type 1 subfamily. Heterodimer of LeuC and LeuD.

The catalysed reaction is (2R,3S)-3-isopropylmalate = (2S)-2-isopropylmalate. The protein operates within amino-acid biosynthesis; L-leucine biosynthesis; L-leucine from 3-methyl-2-oxobutanoate: step 2/4. Functionally, catalyzes the isomerization between 2-isopropylmalate and 3-isopropylmalate, via the formation of 2-isopropylmaleate. This Magnetococcus marinus (strain ATCC BAA-1437 / JCM 17883 / MC-1) protein is 3-isopropylmalate dehydratase small subunit.